Consider the following 684-residue polypeptide: Beta-taxilin (684 aa).

Over residues 1-26 (MEANHSEQLSAERQSTPPGDSSSLPS) the composition is skewed to polar residues. The segment at 1-132 (MEANHSEQLS…KEPVSNKEQK (132 aa)) is disordered. The segment covering 45–64 (PEKEASVHPDISEELNRQLE) has biased composition (basic and acidic residues). Positions 93-107 (ESPDNEDGDCEETTE) are enriched in acidic residues. Coiled coils occupy residues 135 to 351 (KKIL…VLKE) and 378 to 467 (NEVF…SEKD). Over residues 458-475 (IRDAEISEKDDQSQHNSD) the composition is skewed to basic and acidic residues. Disordered stretches follow at residues 458–485 (IRDAEISEKDDQSQHNSDEEPESNVSVD), 514–632 (ESTP…DVPA), and 646–684 (PACEPSRQPPRAAAEELPVGASAGPQPRNVADTNLEGVD). 2 positions are modified to phosphoserine: serine 474 and serine 483. Residues 514–524 (ESTPHQSKETQ) are compositionally biased toward basic and acidic residues. A compositionally biased stretch (polar residues) spans 613-622 (QAPQAPTEAS).

It belongs to the taxilin family. Binds to the C-terminal coiled coil region of syntaxin family members STX1A, STX3A and STX4A. Has a preference for STX1A. In terms of tissue distribution, expressed in skeletal muscle.

Promotes motor nerve regeneration. May be involved in intracellular vesicle traffic. This Homo sapiens (Human) protein is Beta-taxilin (TXLNB).